Consider the following 254-residue polypeptide: Alcohol dehydrogenase (254 aa).

Met-1 bears the N-acetylmethionine mark. NAD(+) is bound at residue Phe-10–Phe-33. Residue Ser-138 coordinates substrate. The active-site Proton acceptor is the Tyr-151.

This sequence belongs to the short-chain dehydrogenases/reductases (SDR) family. In terms of assembly, homodimer.

It carries out the reaction a primary alcohol + NAD(+) = an aldehyde + NADH + H(+). The enzyme catalyses a secondary alcohol + NAD(+) = a ketone + NADH + H(+). This chain is Alcohol dehydrogenase (Adh), found in Drosophila lebanonensis (Fruit fly).